Consider the following 293-residue polypeptide: NAD kinase (293 aa).

Asp-72 acts as the Proton acceptor in catalysis. NAD(+)-binding positions include 72 to 73 (DG), 146 to 147 (ND), Arg-157, Arg-174, Asp-176, 187 to 192 (TAYALS), and Gln-247.

This sequence belongs to the NAD kinase family. Requires a divalent metal cation as cofactor.

The protein localises to the cytoplasm. The catalysed reaction is NAD(+) + ATP = ADP + NADP(+) + H(+). Involved in the regulation of the intracellular balance of NAD and NADP, and is a key enzyme in the biosynthesis of NADP. Catalyzes specifically the phosphorylation on 2'-hydroxyl of the adenosine moiety of NAD to yield NADP. The protein is NAD kinase of Teredinibacter turnerae (strain ATCC 39867 / T7901).